A 397-amino-acid chain; its full sequence is Chalcone synthase 2 (397 aa).

The active site involves C168.

It belongs to the thiolase-like superfamily. Chalcone/stilbene synthases family.

It catalyses the reaction (E)-4-coumaroyl-CoA + 3 malonyl-CoA + 3 H(+) = 2',4,4',6'-tetrahydroxychalcone + 3 CO2 + 4 CoA. It functions in the pathway secondary metabolite biosynthesis; flavonoid biosynthesis. Its function is as follows. The primary product of this enzyme is 4,2',4',6'-tetrahydroxychalcone (also termed naringenin-chalcone or chalcone) which can under specific conditions spontaneously isomerize into naringenin. The chain is Chalcone synthase 2 (CHS2) from Daucus carota (Wild carrot).